A 94-amino-acid polypeptide reads, in one-letter code: Alpha-galactosyl-binding lectin (94 aa).

In terms of assembly, homodimer. In terms of processing, contains three disulfide bonds.

Alpha-galactosyl-binding lectin with preference for galactose-alpha-1,4-galactose. This Lyophyllum decastes (Fried chicken mushroom) protein is Alpha-galactosyl-binding lectin.